The following is a 113-amino-acid chain: UPF0342 protein SPy_0811/M5005_Spy0626 (113 aa).

This sequence belongs to the UPF0342 family.

The chain is UPF0342 protein SPy_0811/M5005_Spy0626 from Streptococcus pyogenes serotype M1.